Reading from the N-terminus, the 287-residue chain is Nucleotide-binding protein Hhal_2130 (287 aa).

Position 11–18 (11–18 (GLSGSGKS)) interacts with ATP. Residue 63 to 66 (DARN) participates in GTP binding.

Belongs to the RapZ-like family.

Its function is as follows. Displays ATPase and GTPase activities. This Halorhodospira halophila (strain DSM 244 / SL1) (Ectothiorhodospira halophila (strain DSM 244 / SL1)) protein is Nucleotide-binding protein Hhal_2130.